Consider the following 37-residue polypeptide: Calcitonin gene-related peptide 1 (37 aa).

Cysteines 2 and 7 form a disulfide. Residue phenylalanine 37 is modified to Phenylalanine amide.

The protein belongs to the calcitonin family.

The protein resides in the secreted. Its function is as follows. CGRP1/CALCA is a peptide hormone that induces vasodilation mediated by the CALCRL-RAMP1 receptor complex. Dilates a variety of vessels including the coronary, cerebral and systemic vasculature. Its abundance in the CNS also points toward a neurotransmitter or neuromodulator role. It also elevates platelet cAMP. CGRP1 can also bind and activate CALCR-RAMP1 (AMYR1) receptor complex. The protein is Calcitonin gene-related peptide 1 (CALCA) of Sus scrofa (Pig).